We begin with the raw amino-acid sequence, 257 residues long: MAVLKPVRLGVNVDHVATVRNARGGALPDPVRAAALAKAAGAHGITAHLREDRRHIRDADMERLKAEIDLPLNFEMAATDEMVAIACRVRPNACCLVPERREERTTEGGLDAAGQRAELAPRIARLKAAGIRVSLFIAADPAQIAAAAELGADIVELHTGAWCDAVTEGRHVEAEAEFVRLKAGARQAAGLGLEVHAGHGLDYATAERIAAFPQIVELNIGHFLIGEAIFVGLDQAIARMRAAIAAGRAAVGDGAAA.

Asn-12 lines the 3-amino-2-oxopropyl phosphate pocket. 14 to 15 (DH) lines the 1-deoxy-D-xylulose 5-phosphate pocket. Residue Arg-23 coordinates 3-amino-2-oxopropyl phosphate. Residue His-48 is the Proton acceptor of the active site. 1-deoxy-D-xylulose 5-phosphate contacts are provided by Arg-50 and His-55. Catalysis depends on Glu-75, which acts as the Proton acceptor. 1-deoxy-D-xylulose 5-phosphate is bound at residue Thr-105. The active-site Proton donor is His-199. 3-amino-2-oxopropyl phosphate is bound by residues Gly-200 and 221–222 (GH).

This sequence belongs to the PNP synthase family. Homooctamer; tetramer of dimers.

The protein localises to the cytoplasm. The catalysed reaction is 3-amino-2-oxopropyl phosphate + 1-deoxy-D-xylulose 5-phosphate = pyridoxine 5'-phosphate + phosphate + 2 H2O + H(+). It functions in the pathway cofactor biosynthesis; pyridoxine 5'-phosphate biosynthesis; pyridoxine 5'-phosphate from D-erythrose 4-phosphate: step 5/5. Its function is as follows. Catalyzes the complicated ring closure reaction between the two acyclic compounds 1-deoxy-D-xylulose-5-phosphate (DXP) and 3-amino-2-oxopropyl phosphate (1-amino-acetone-3-phosphate or AAP) to form pyridoxine 5'-phosphate (PNP) and inorganic phosphate. This Xanthobacter autotrophicus (strain ATCC BAA-1158 / Py2) protein is Pyridoxine 5'-phosphate synthase.